Reading from the N-terminus, the 125-residue chain is Large ribosomal subunit protein bL12 (125 aa).

Belongs to the bacterial ribosomal protein bL12 family. As to quaternary structure, homodimer. Part of the ribosomal stalk of the 50S ribosomal subunit. Forms a multimeric L10(L12)X complex, where L10 forms an elongated spine to which 2 to 4 L12 dimers bind in a sequential fashion. Binds GTP-bound translation factors.

In terms of biological role, forms part of the ribosomal stalk which helps the ribosome interact with GTP-bound translation factors. Is thus essential for accurate translation. The polypeptide is Large ribosomal subunit protein bL12 (Rickettsia prowazekii (strain Madrid E)).